A 140-amino-acid polypeptide reads, in one-letter code: FLYWCH family member 2 (140 aa).

Disordered regions lie at residues 1–39 (MPLP…PREF) and 83–140 (THPE…GKSL). At S21 the chain carries Phosphoserine. Basic and acidic residues predominate over residues 98-114 (PEQKRSRQDPGADRTED). The span at 118–127 (AAGPPEAAGE) shows a compositional bias: low complexity.

The chain is FLYWCH family member 2 (FLYWCH2) from Pongo abelii (Sumatran orangutan).